The sequence spans 272 residues: Shikimate dehydrogenase (NADP(+)) (272 aa).

Shikimate contacts are provided by residues 19 to 21 (SLS) and threonine 66. Lysine 70 (proton acceptor) is an active-site residue. Glutamate 82 lines the NADP(+) pocket. Shikimate-binding residues include asparagine 91 and aspartate 106. Residues 129 to 133 (GAGGA), 151 to 156 (NRTPEK), and isoleucine 214 each bind NADP(+). Residue tyrosine 216 participates in shikimate binding. Glycine 237 is an NADP(+) binding site.

The protein belongs to the shikimate dehydrogenase family. Homodimer.

It catalyses the reaction shikimate + NADP(+) = 3-dehydroshikimate + NADPH + H(+). It functions in the pathway metabolic intermediate biosynthesis; chorismate biosynthesis; chorismate from D-erythrose 4-phosphate and phosphoenolpyruvate: step 4/7. Functionally, involved in the biosynthesis of the chorismate, which leads to the biosynthesis of aromatic amino acids. Catalyzes the reversible NADPH linked reduction of 3-dehydroshikimate (DHSA) to yield shikimate (SA). This Thermococcus kodakarensis (strain ATCC BAA-918 / JCM 12380 / KOD1) (Pyrococcus kodakaraensis (strain KOD1)) protein is Shikimate dehydrogenase (NADP(+)).